A 182-amino-acid chain; its full sequence is Ribosome-recycling factor (182 aa).

The interval 137 to 158 (KKSEKESEISEDQSRDEQDNVQ) is disordered.

Belongs to the RRF family.

It is found in the cytoplasm. Responsible for the release of ribosomes from messenger RNA at the termination of protein biosynthesis. May increase the efficiency of translation by recycling ribosomes from one round of translation to another. In Prochlorococcus marinus (strain MIT 9211), this protein is Ribosome-recycling factor.